Consider the following 424-residue polypeptide: Neurotensin receptor type 1 (424 aa).

Residues 1–23 are disordered; it reads MHLNSSVPQGTPGEPDAQPFSGP. The Extracellular portion of the chain corresponds to 1–68; that stretch reads MHLNSSVPQG…TDIYSKVLVT (68 aa). N-linked (GlcNAc...) asparagine glycans are attached at residues N4, N38, and N42. The chain crosses the membrane as a helical span at residues 69–89; that stretch reads AIYLALFVVGTVGNSVTAFTL. Over 90 to 103 the chain is Cytoplasmic; the sequence is ARKKSLQSLQSTVH. Residues 104–123 traverse the membrane as a helical segment; the sequence is YHLGSLALSDLLILLLAMPV. The Extracellular segment spans residues 124–143; it reads ELYNFIWVHHPWAFGDAGCR. Residues C142 and C225 are joined by a disulfide bond. The helical transmembrane segment at 144–165 threads the bilayer; that stretch reads GYYFLRDACTYATALNVASLSV. Residues 166–185 are Cytoplasmic-facing; the sequence is ERYLAICHPFKAKTLMSRSR. Residues 186 to 206 form a helical membrane-spanning segment; that stretch reads TKKFISAIWLASALLAIPMLF. Over 207-235 the chain is Extracellular; sequence TMGLQNRSGDGTHPGGLVCTPIVDTATVK. Residues 236–260 traverse the membrane as a helical segment; that stretch reads VVIQVNTFMSFLFPMLVISILNTVI. At 261-308 the chain is on the cytoplasmic side; the sequence is ANKLTVMVHQAAEQGRVCTVGTHNGLEHSTFNMTIEPGRVQALRHGVL. A helical membrane pass occupies residues 309-330; that stretch reads VLRAVVIAFVVCWLPYHVRRLM. The segment at 326–349 is neurotensin binding; that stretch reads VRRLMFCYISDEQWTTFLFDFYHY. Topologically, residues 331 to 348 are extracellular; it reads FCYISDEQWTTFLFDFYH. Residues 349–369 form a helical membrane-spanning segment; it reads YFYMLTNALFYVSSAINPILY. Residues 370-424 lie on the Cytoplasmic side of the membrane; it reads NLVSANFRQVFLSTLACLCPGWRHRRKKRPTFSRKPNSMSSNHAFSTSATRETLY. Residues C386 and C388 are each lipidated (S-palmitoyl cysteine). The segment at 397-424 is disordered; that stretch reads KRPTFSRKPNSMSSNHAFSTSATRETLY. The span at 403–424 shows a compositional bias: polar residues; it reads RKPNSMSSNHAFSTSATRETLY.

The protein belongs to the G-protein coupled receptor 1 family. Neurotensin receptor subfamily. NTSR1 sub-subfamily. In terms of assembly, interacts (palmitoylated form) with GNA11. N-glycosylated. Post-translationally, palmitoylated; this is required for normal localization at membrane rafts and normal GNA11-mediated activation of down-stream signaling cascades. The palmitoylation level increases in response to neurotensin treatment. In terms of tissue distribution, detected in brain and small intestine.

The protein localises to the cell membrane. The protein resides in the membrane raft. G-protein coupled receptor for the tridecapeptide neurotensin (NTS). Signaling is effected via G proteins that activate a phosphatidylinositol-calcium second messenger system. Signaling leads to the activation of downstream MAP kinases and protects cells against apoptosis. This Rattus norvegicus (Rat) protein is Neurotensin receptor type 1 (Ntsr1).